Reading from the N-terminus, the 2871-residue chain is MRRGRLLEVALGFTVLLASYTSHRAEANLEAGNGKETRASRAKRRGGGGHDALKGPNVCGSRYNAYCCPGWKTLPGGNQCIVPICRHSCGDGFCSRPNMCTCPSGQIAPSCGSRSIQHCNIRCMNGGSCSDDHCLCQKGYIGTHCGQPVCESGCLNGGRCVAPNRCACTYGFTGPQCERDYRTGPCFTVVSNQMCQGQLSGIVCTKTLCCATVGRAWGHPCEMCPAQPHPCRRGFIPNIRTGACQDVDECQAIPGLCQGGNCINTVGSFECKCPAGHKFNEVSQKCEDIDECSTIPGICDGGECTNTVSSYFCKCPPGFYTSPDGTRCIDVRPGYCYTALTNGRCSNQLPQSITKMQCCCDVGRCWSPGVTVTPEMCPIRATEDFNKLCSVPMVVPERPGYPSPPLGPIPPVHPVPPGFPPGPQIPVPRPPVEYPYPSREPPRVLPVNVTDYCQLFRYLCHNGRCIPTPGSYRCECNKGFQLDLRGECIDVDECEKNPCAGGECINNQGSYTCQCRPGYQSTLTRTECRDIDECLQNGRICNNGRCINTDGSFHCVCNAGFHVTRDGKNCEDMDECSIRNMCLNGMCINEDGSFKCICKPGFQLASDGRYCKDINECETSGICMNGRCVNTDGSYRCECFPGLAVGLDGRVCVDTHMRSTCYGGYKRGQCVKPLFGAVTKSECCCASTEYAFGEPCQPCPSQNSAEYQALCSSGPGMTSAGSDINECALDPDICPNGICENLRGTYKCICNSGYEVDSTGKNCVDINECVLNSLLCDNGQCRNTPGSFVCTCPKGFIYKPDLKTCEDIDECESSPCINGVCKNSPGSFICECSSESTLDPTKTICIETIKGTCWQTIIDGRCEININGATLKSQCCSSLGAAWGSPCTPCQVDPICGKGYSRIKGTQCEDIDECEVFPGVCKNGLCVNSKGSFKCQCPNGMTLDATGRICLDIRLETCFLRYEDEECTLPVVGRHRMDACCCSVGAAWGTEECEECPPRNTPEYEELCPRGPGFATKEITNGKPFFKDINECKMIPNLCTHGKCRNTIGSFKCRCDSGFALDSEERNCIDIDECRISPDLCGRGQCVNTPGDFECKCDEGYESGFMMMKNCMDIDECQRDPLLCRGGVCLNTEGSYRCECPSGHQMSPNISACIDINECELSAHLCPHGRCVNLIGKYQRARNPGYHSTPDRLFCVDIDECSIMNGGCETFCTNSEGSYECSCQPGFALMPDQRSCTDIDECEDNPNICDGGQCTNIPGEYRCLCYDGFMASEDMKTCVDVNECDLNPNICLSGTCENTKGSFICHCDMGYSGKKGKTGCTDINECEIGAHNCDRHAVCTNTAGSFNCSCSPGWIGDGIKCTDLDECSNGTHMCSQHADCKNTMGSYRCLCKEGYTGDGFTCADLDECSENVKLCGNVQCLYAPGGYHCEYDMGFVPSADRKSCVDSDECSLPNICVFGTCHNLPGLFRCECEIGYELDRSGGNCTDVNECLEPPTCISGNCVNTPGSYTCVCPPDFELNPTRVGCVDTRSGNCYLDVRPRGDNGDTACSNEIGVGVSKASCCCSLGKAWGTPCEQCPPVNTSEYKILCPGGEGFRPNPITVILEDIDECQELPGLCQGGKCINTFGSFQCRCPTGYYLNEDTRVCDDVNECETPGICGPGTCYNTVGNYTCICPPDYMQVNGGNNCMDMRRSLCYRNYYADNQTCDGELLFNMTKKMCCCSYNIGRAWNKPCEQCPIPSTDEFATLCGSQRPGFVIDIYTGLPVDIDECREIPGVCENGVCINMVGSFRCECPVGFFYNDKLLVCEDIDECQNGPVCQRNAECINTAGSYRCDCKPGYRFTSTGQCNDRNECQEIPNICSHGQCIDTVGSFYCLCHTGFKTNADQTMCLDINECERDACGNGTCRNTIGSFNCRCNHGFILSHNNDCIDVDECATGNGNLCRNGQCINTVGSFQCQCNEGYEVAPDGRTCVDINECLLEPGKCAPGTCQNLDGSYRCICPPGYSLQNDKCEDIDECVEEPEICALGTCSNTEGSFKCLCPDGFSLSSTGRRCQDLRMSYCYAKFEGGKCSSPKSRNHSKQECCCALKGEGWGDPCELCPTEPDEAFRQICPYGSGIIVGPDDSAVDMDECKEPDVCKHGQCINTDGSYRCECPFGYILEGNECVDTDECSVGNPCGNGTCKNVIGGFECTCEEGFEPGPMMTCEDINECAQNPLLCAFRCVNTYGSYECKCPTGYVLREDRRMCKDEDECEEGKHDCAEKQMECKNLIGMYICICGPGYQRRPDGEGCVDENECQTKPGICENGRCLNTRGSYTCECNDGFTASPTQDECLDNREGYCFTEVLQNMCQIGSSNRNPVTKSECCCDGGRGWGPHCEICPFQGTVAFKKLCPHGRGFMTNGADIDECKVIHDVCRNGECINDRGSYHCICKTGYTPDITGTACVDLNECNQAPKPCNFICKNTEGSYQCSCPKGYILQEDGRSCKDLDECATKQHNCQFLCVNTIGSFACKCPPGFTQHHTACIDNNECTSDINLCGAKGICQNTPGSFTCECQRGFSLDQSGASCEDVDECEGNHRCQHGCQNIIGGYRCSCPQGYLQHYQWNQCVDENECLSAHICGGASCHNTLGSYKCMCPAGFQYEQFSGGCQDINECGSSQAPCSYGCSNTEGGYLCGCPPGYFRIGQGHCVSGMGMGRGSPEPPASGEMDDNSLSPEACYECKINGYPKRGRKRRSTNETDAFNIEDQPETESNVSLASWDVEKTAVFAFNISHISNKVRILELLPALTTLTNHNRYLIESGNENGFFKINQKEGISYLHFTKKKPVAGTYSLQISSTPLYKKKELNQLEDKYDKDYLSGELGDNLKMKIQILLH.

Residues 1 to 24 form the signal peptide; sequence MRRGRLLEVALGFTVLLASYTSHR. The propeptide occupies 25-44; the sequence is AEANLEAGNGKETRASRAKR. Residues 29-39 are compositionally biased toward basic and acidic residues; sequence LEAGNGKETRA. The interval 29-49 is disordered; the sequence is LEAGNGKETRASRAKRRGGGG. Residues 45–81 form a fibrillin unique N-terminal (FUN) domain region; sequence RGGGGHDALKGPNVCGSRYNAYCCPGWKTLPGGNQCI. The tract at residues 45-450 is N-terminal domain; the sequence is RGGGGHDALK…PPRVLPVNVT (406 aa). 11 disulfide bridges follow: Cys59/Cys68, Cys67/Cys80, Cys85/Cys94, Cys89/Cys100, Cys102/Cys111, Cys119/Cys129, Cys123/Cys134, Cys136/Cys145, Cys150/Cys160, Cys154/Cys166, and Cys168/Cys177. EGF-like domains are found at residues 81 to 112, 115 to 146, and 147 to 178; these read IVPICRHSCGDGFCSRPNMCTCPSGQIAPSCG, SIQHCNIRCMNGGSCSDDHCLCQKGYIGTHCG, and QPVCESGCLNGGRCVAPNRCACTYGFTGPQCE. An interaction with MFAP4 region spans residues 119-329; that stretch reads CNIRCMNGGS…YTSPDGTRCI (211 aa). The 53-residue stretch at 184–236 folds into the TB 1 domain; sequence GPCFTVVSNQMCQGQLSGIVCTKTLCCATVGRAWGHPCEMCPAQPHPCRRGFI. The hybrid domain 1 stretch occupies residues 195-221; the sequence is CQGQLSGIVCTKTLCCATVGRAWGHPC. The EGF-like 4; calcium-binding domain maps to 246–287; the sequence is DVDECQAIPGLCQGGNCINTVGSFECKCPAGHKFNEVSQKCE. 6 disulfide bridges follow: Cys250/Cys262, Cys257/Cys271, Cys273/Cys286, Cys292/Cys304, Cys299/Cys313, and Cys315/Cys328. O-linked (Glc) serine glycosylation occurs at Ser268. The region spanning 288–329 is the EGF-like 5; calcium-binding domain; the sequence is DIDECSTIPGICDGGECTNTVSSYFCKCPPGFYTSPDGTRCI. One can recognise a TB 2 domain in the interval 334-389; sequence GYCYTALTNGRCSNQLPQSITKMQCCCDVGRCWSPGVTVTPEMCPIRATEDFNKLC. Asn448 carries N-linked (GlcNAc...) asparagine glycosylation. Residues 449–489 enclose the EGF-like 6 domain; sequence VTDYCQLFRYLCHNGRCIPTPGSYRCECNKGFQLDLRGECI. Disulfide bonds link Cys453–Cys465, Cys460–Cys474, Cys476–Cys488, Cys494–Cys504, Cys499–Cys513, Cys515–Cys528, Cys534–Cys546, Cys541–Cys555, Cys557–Cys570, Cys576–Cys587, Cys582–Cys596, Cys598–Cys611, Cys617–Cys628, Cys623–Cys637, and Cys639–Cys652. Ser471 carries an O-linked (Glc) serine glycan. The region spanning 490–529 is the EGF-like 7; calcium-binding domain; sequence DVDECEKNPCAGGECINNQGSYTCQCRPGYQSTLTRTECR. O-linked (Glc) serine glycosylation occurs at Ser510. The EGF-like 8; calcium-binding domain occupies 530 to 571; the sequence is DIDECLQNGRICNNGRCINTDGSFHCVCNAGFHVTRDGKNCE. Residues 572-612 enclose the EGF-like 9; calcium-binding domain; it reads DMDECSIRNMCLNGMCINEDGSFKCICKPGFQLASDGRYCK. One can recognise an EGF-like 10; calcium-binding domain in the interval 613 to 653; sequence DINECETSGICMNGRCVNTDGSYRCECFPGLAVGLDGRVCV. The TB 3 domain occupies 659–711; that stretch reads STCYGGYKRGQCVKPLFGAVTKSECCCASTEYAFGEPCQPCPSQNSAEYQALC. The EGF-like 11; calcium-binding domain occupies 723–764; the sequence is DINECALDPDICPNGICENLRGTYKCICNSGYEVDSTGKNCV. Cystine bridges form between Cys727–Cys739, Cys734–Cys748, Cys750–Cys763, Cys769–Cys781, Cys776–Cys790, Cys792–Cys805, Cys811–Cys821, Cys816–Cys830, Cys832–Cys845, Cys853–Cys875, Cys862–Cys887, Cys876–Cys890, Cys896–Cys908, Cys914–Cys926, Cys921–Cys935, and Cys937–Cys950. Positions 765-806 constitute an EGF-like 12; calcium-binding domain; sequence DINECVLNSLLCDNGQCRNTPGSFVCTCPKGFIYKPDLKTCE. The EGF-like 13; calcium-binding domain occupies 807–846; the sequence is DIDECESSPCINGVCKNSPGSFICECSSESTLDPTKTICI. Residues 851 to 902 enclose the TB 4 domain; the sequence is GTCWQTIIDGRCEININGATLKSQCCSSLGAAWGSPCTPCQVDPICGKGYSR. Positions 862 to 887 are hybrid domain 2; it reads CEININGATLKSQCCSSLGAAWGSPC. The EGF-like 14; calcium-binding domain occupies 910 to 951; that stretch reads DIDECEVFPGVCKNGLCVNSKGSFKCQCPNGMTLDATGRICL. The 53-residue stretch at 956–1008 folds into the TB 5 domain; the sequence is ETCFLRYEDEECTLPVVGRHRMDACCCSVGAAWGTEECEECPPRNTPEYEELC. In terms of domain architecture, EGF-like 15; calcium-binding spans 1028 to 1069; the sequence is DINECKMIPNLCTHGKCRNTIGSFKCRCDSGFALDSEERNCI. Intrachain disulfides connect Cys1032–Cys1044, Cys1039–Cys1053, Cys1055–Cys1068, Cys1074–Cys1086, Cys1081–Cys1095, Cys1097–Cys1111, Cys1117–Cys1129, Cys1124–Cys1138, Cys1140–Cys1153, Cys1159–Cys1171, Cys1201–Cys1212, Cys1208–Cys1221, Cys1223–Cys1236, Cys1242–Cys1254, Cys1249–Cys1263, Cys1265–Cys1278, Cys1284–Cys1296, Cys1291–Cys1305, Cys1307–Cys1320, Cys1326–Cys1339, Cys1333–Cys1348, Cys1350–Cys1361, Cys1367–Cys1380, Cys1374–Cys1389, Cys1391–Cys1402, Cys1408–Cys1420, Cys1415–Cys1429, Cys1450–Cys1461, Cys1456–Cys1470, Cys1472–Cys1485, Cys1491–Cys1502, Cys1497–Cys1511, Cys1513–Cys1526, Cys1534–Cys1562, Cys1549–Cys1574, Cys1563–Cys1577, Cys1564–Cys1589, Cys1610–Cys1622, Cys1617–Cys1631, Cys1633–Cys1646, Cys1652–Cys1663, Cys1658–Cys1672, and Cys1674–Cys1687. The EGF-like 16; calcium-binding domain maps to 1070-1112; sequence DIDECRISPDLCGRGQCVNTPGDFECKCDEGYESGFMMMKNCM. The region spanning 1113–1154 is the EGF-like 17; calcium-binding domain; that stretch reads DIDECQRDPLLCRGGVCLNTEGSYRCECPSGHQMSPNISACI. The O-linked (Glc) serine glycan is linked to Ser1135. N-linked (GlcNAc...) asparagine glycosylation is present at Asn1149. Residues 1155 to 1196 enclose the EGF-like 18; calcium-binding domain; sequence DINECELSAHLCPHGRCVNLIGKYQRARNPGYHSTPDRLFCV. An EGF-like 19; calcium-binding domain is found at 1197–1237; it reads DIDECSIMNGGCETFCTNSEGSYECSCQPGFALMPDQRSCT. O-linked (Glc) serine glycosylation is present at Ser1218. Positions 1238 to 1279 constitute an EGF-like 20; calcium-binding domain; it reads DIDECEDNPNICDGGQCTNIPGEYRCLCYDGFMASEDMKTCV. The region spanning 1280–1321 is the EGF-like 21; calcium-binding domain; that stretch reads DVNECDLNPNICLSGTCENTKGSFICHCDMGYSGKKGKTGCT. An O-linked (Glc) serine glycan is attached at Ser1302. Positions 1322–1362 constitute an EGF-like 22; calcium-binding domain; it reads DINECEIGAHNCDRHAVCTNTAGSFNCSCSPGWIGDGIKCT. O-linked (Glc) serine glycosylation occurs at Ser1345. Asn1347 is a glycosylation site (N-linked (GlcNAc...) asparagine). Residues 1363 to 1403 enclose the EGF-like 23; calcium-binding domain; it reads DLDECSNGTHMCSQHADCKNTMGSYRCLCKEGYTGDGFTCA. Asn1369 carries N-linked (GlcNAc...) asparagine glycosylation. Ser1386 carries an O-linked (Glc) serine glycan. The 42-residue stretch at 1404 to 1445 folds into the EGF-like 24; calcium-binding domain; it reads DLDECSENVKLCGNVQCLYAPGGYHCEYDMGFVPSADRKSCV. Residues 1446 to 1486 form the EGF-like 25; calcium-binding domain; sequence DSDECSLPNICVFGTCHNLPGLFRCECEIGYELDRSGGNCT. N-linked (GlcNAc...) asparagine glycosylation occurs at Asn1484. In terms of domain architecture, EGF-like 26; calcium-binding spans 1487–1527; it reads DVNECLEPPTCISGNCVNTPGSYTCVCPPDFELNPTRVGCV. O-linked (Glc) serine glycosylation occurs at Ser1508. Positions 1528–2731 are C-terminal domain; it reads DTRSGNCYLD…GYPKRGRKRR (1204 aa). The region spanning 1532–1589 is the TB 6 domain; the sequence is GNCYLDVRPRGDNGDTACSNEIGVGVSKASCCCSLGKAWGTPCEQCPPVNTSEYKILC. A Cell attachment site motif is present at residues 1541-1543; sequence RGD. Asn1581 is a glycosylation site (N-linked (GlcNAc...) asparagine). The region spanning 1606 to 1647 is the EGF-like 27; calcium-binding domain; it reads DIDECQELPGLCQGGKCINTFGSFQCRCPTGYYLNEDTRVCD. Ser1628 is a glycosylation site (O-linked (Glc) serine). The EGF-like 28; calcium-binding domain maps to 1648–1688; the sequence is DVNECETPGICGPGTCYNTVGNYTCICPPDYMQVNGGNNCM. The N-linked (GlcNAc...) asparagine glycan is linked to Asn1669. The 56-residue stretch at 1693–1748 folds into the TB 7 domain; sequence SLCYRNYYADNQTCDGELLFNMTKKMCCCSYNIGRAWNKPCEQCPIPSTDEFATLC. N-linked (GlcNAc...) asparagine glycosylation is found at Asn1703 and Asn1713. An EGF-like 29; calcium-binding domain is found at 1766 to 1807; sequence DIDECREIPGVCENGVCINMVGSFRCECPVGFFYNDKLLVCE. 40 disulfides stabilise this stretch: Cys1770/Cys1782, Cys1777/Cys1791, Cys1793/Cys1806, Cys1812/Cys1824, Cys1818/Cys1833, Cys1835/Cys1847, Cys1853/Cys1865, Cys1860/Cys1874, Cys1876/Cys1889, Cys1895/Cys1905, Cys1900/Cys1914, Cys1916/Cys1928, Cys1934/Cys1947, Cys1942/Cys1956, Cys1958/Cys1971, Cys1977/Cys1989, Cys1984/Cys1998, Cys2000/Cys2011, Cys2017/Cys2029, Cys2024/Cys2038, Cys2040/Cys2053, Cys2061/Cys2083, Cys2070/Cys2096, Cys2084/Cys2099, Cys2085/Cys2111, Cys2131/Cys2142, Cys2137/Cys2151, Cys2153/Cys2164, Cys2170/Cys2181, Cys2176/Cys2190, Cys2192/Cys2204, Cys2210/Cys2221, Cys2217/Cys2230, Cys2232/Cys2245, Cys2251/Cys2265, Cys2258/Cys2274, Cys2276/Cys2289, Cys2295/Cys2307, Cys2302/Cys2316, and Cys2318/Cys2331. The region spanning 1808 to 1848 is the EGF-like 30; calcium-binding domain; that stretch reads DIDECQNGPVCQRNAECINTAGSYRCDCKPGYRFTSTGQCN. O-linked (Glc) serine glycosylation is present at Ser1830. The EGF-like 31; calcium-binding domain occupies 1849-1890; that stretch reads DRNECQEIPNICSHGQCIDTVGSFYCLCHTGFKTNADQTMCL. An O-linked (Glc) serine glycan is attached at Ser1871. One can recognise an EGF-like 32; calcium-binding domain in the interval 1891–1929; it reads DINECERDACGNGTCRNTIGSFNCRCNHGFILSHNNDCI. Residue Asn1902 is glycosylated (N-linked (GlcNAc...) asparagine). O-linked (Glc) serine glycosylation is present at Ser1911. In terms of domain architecture, EGF-like 33; calcium-binding spans 1930-1972; the sequence is DVDECATGNGNLCRNGQCINTVGSFQCQCNEGYEVAPDGRTCV. An O-linked (Glc) serine glycan is attached at Ser1953. An EGF-like 34; calcium-binding domain is found at 1973 to 2012; it reads DINECLLEPGKCAPGTCQNLDGSYRCICPPGYSLQNDKCE. The EGF-like 35; calcium-binding domain occupies 2013–2054; that stretch reads DIDECVEEPEICALGTCSNTEGSFKCLCPDGFSLSSTGRRCQ. A glycan (O-linked (Glc) serine) is linked at Ser2035. The TB 8 domain occupies 2059-2111; sequence SYCYAKFEGGKCSSPKSRNHSKQECCCALKGEGWGDPCELCPTEPDEAFRQIC. Asn2077 is a glycosylation site (N-linked (GlcNAc...) asparagine). One can recognise an EGF-like 36; calcium-binding domain in the interval 2127–2165; sequence DMDECKEPDVCKHGQCINTDGSYRCECPFGYILEGNECV. Ser2148 is a glycosylation site (O-linked (Glc) serine). The EGF-like 37; calcium-binding domain maps to 2166-2205; that stretch reads DTDECSVGNPCGNGTCKNVIGGFECTCEEGFEPGPMMTCE. N-linked (GlcNAc...) asparagine glycosylation occurs at Asn2178. An EGF-like 38; calcium-binding domain is found at 2206 to 2246; it reads DINECAQNPLLCAFRCVNTYGSYECKCPTGYVLREDRRMCK. Residue Ser2227 is glycosylated (O-linked (Glc) serine). In terms of domain architecture, EGF-like 39; calcium-binding spans 2247 to 2290; sequence DEDECEEGKHDCAEKQMECKNLIGMYICICGPGYQRRPDGEGCV. One can recognise an EGF-like 40; calcium-binding domain in the interval 2291–2332; sequence DENECQTKPGICENGRCLNTRGSYTCECNDGFTASPTQDECL. Ser2313 is a glycosylation site (O-linked (Glc) serine). Residues 2337-2390 enclose the TB 9 domain; sequence GYCFTEVLQNMCQIGSSNRNPVTKSECCCDGGRGWGPHCEICPFQGTVAFKKLC. The region spanning 2402–2443 is the EGF-like 41; calcium-binding domain; that stretch reads DIDECKVIHDVCRNGECINDRGSYHCICKTGYTPDITGTACV. Intrachain disulfides connect Cys2406/Cys2418, Cys2413/Cys2427, Cys2429/Cys2442, Cys2448/Cys2459, Cys2455/Cys2468, Cys2470/Cys2483, Cys2489/Cys2500, Cys2496/Cys2509, Cys2511/Cys2522, Cys2528/Cys2541, Cys2535/Cys2550, Cys2552/Cys2565, Cys2571/Cys2581, Cys2577/Cys2590, Cys2592/Cys2605, Cys2611/Cys2622, Cys2617/Cys2631, Cys2633/Cys2646, Cys2652/Cys2663, Cys2659/Cys2672, and Cys2674/Cys2686. The EGF-like 42; calcium-binding domain occupies 2444-2484; that stretch reads DLNECNQAPKPCNFICKNTEGSYQCSCPKGYILQEDGRSCK. Ser2465 is a glycosylation site (O-linked (Glc) serine). The region spanning 2485–2523 is the EGF-like 43; calcium-binding domain; the sequence is DLDECATKQHNCQFLCVNTIGSFACKCPPGFTQHHTACI. Residues 2524-2566 enclose the EGF-like 44; calcium-binding domain; the sequence is DNNECTSDINLCGAKGICQNTPGSFTCECQRGFSLDQSGASCE. Ser2547 is a glycosylation site (O-linked (Glc) serine). The 40-residue stretch at 2567–2606 folds into the EGF-like 45; calcium-binding domain; sequence DVDECEGNHRCQHGCQNIIGGYRCSCPQGYLQHYQWNQCV. One can recognise an EGF-like 46; calcium-binding domain in the interval 2607 to 2647; sequence DENECLSAHICGGASCHNTLGSYKCMCPAGFQYEQFSGGCQ. Ser2628 carries O-linked (Glc) serine glycosylation. The region spanning 2648 to 2687 is the EGF-like 47; calcium-binding domain; the sequence is DINECGSSQAPCSYGCSNTEGGYLCGCPPGYFRIGQGHCV. Phosphoserine occurs at positions 2702 and 2709. Asn2734, Asn2750, and Asn2767 each carry an N-linked (GlcNAc...) asparagine glycan.

It belongs to the fibrillin family. Interacts with COL16A1. Interacts with integrin alpha-V/beta-3. Interacts with ADAMTS10; this interaction promotes microfibril assembly. Interacts with THSD4; this interaction promotes fibril formation. Interacts (via N-terminal domain) with FBLN2 and FBLN5. Interacts with ELN. Forms a ternary complex with ELN and FBLN2 or FBLN5 and a significant interaction with ELN seen only in the presence of FBLN2 or FBLN5. Interacts (via N-terminal domain) with LTBP2 (via C-terminal domain) in a Ca(+2)-dependent manner. Interacts (via N-terminal domain) with LTBP1 (via C-terminal domain). Interacts with integrins ITGA5:ITGB1, ITGAV:ITGB3 and ITGAV:ITGB6. Interacts (via N-terminal domain) with BMP2, BMP4, BMP7, BMP10 and GDF5. Interacts (via N-terminal domain) with MFAP2 and MFAP5. Interacts with ADAMTSL5. Interacts with MFAP4. Interacts (via N-terminal domain) with TNFSF11 in a Ca(+2)-dependent manner. Interacts (via N-terminal domain) with EFEMP2; this interaction inhibits EFEMP2 binding to LOX and ELN. In terms of processing, cleavage of N- and C-terminus by furin is required for incorporation into the extracellular matrix and assembly into microfibrils. The C-terminus, which corresponds to the Asprosin chain, was initially thought to constitute a propeptide. Fibrillin-1 and Asprosin chains are still linked together during the secretion from cells, but are subsequently separated by furin, an essential step for incorporation of Fibrillin-1 into the nascent microfibrils. Post-translationally, forms intermolecular disulfide bonds either with other fibrillin-1 molecules or with other components of the microfibrils. O-glycosylated on serine residues by POGLUT2 and POGLUT3 which is necessary for efficient protein secretion.

The protein resides in the secreted. The protein localises to the extracellular space. It localises to the extracellular matrix. Its function is as follows. Structural component of the 10-12 nm diameter microfibrils of the extracellular matrix, which conveys both structural and regulatory properties to load-bearing connective tissues. Fibrillin-1-containing microfibrils provide long-term force bearing structural support. In tissues such as the lung, blood vessels and skin, microfibrils form the periphery of the elastic fiber, acting as a scaffold for the deposition of elastin. In addition, microfibrils can occur as elastin-independent networks in tissues such as the ciliary zonule, tendon, cornea and glomerulus where they provide tensile strength and have anchoring roles. Fibrillin-1 also plays a key role in tissue homeostasis through specific interactions with growth factors, such as the bone morphogenetic proteins (BMPs), growth and differentiation factors (GDFs) and latent transforming growth factor-beta-binding proteins (LTBPs), cell-surface integrins and other extracellular matrix protein and proteoglycan components. Regulates osteoblast maturation by controlling TGF-beta bioavailability and calibrating TGF-beta and BMP levels, respectively. Negatively regulates osteoclastogenesis by binding and sequestering an osteoclast differentiation and activation factor TNFSF11. This leads to disruption of TNFSF11-induced Ca(2+) signaling and impairment of TNFSF11-mediated nuclear translocation and activation of transcription factor NFATC1 which regulates genes important for osteoclast differentiation and function. Mediates cell adhesion via its binding to cell surface receptors integrins ITGAV:ITGB3 and ITGA5:ITGB1. Binds heparin and this interaction plays an important role in the assembly of microfibrils. In terms of biological role, hormone that targets the liver to increase plasma glucose levels. Secreted by white adipose tissue and circulates in the plasma. Acts in response to fasting and promotes blood glucose elevation by binding to the surface of hepatocytes. Promotes hepatocyte glucose release by activating the protein kinase A activity in the liver, resulting in rapid glucose release into the circulation. The protein is Fibrillin-1 of Sus scrofa (Pig).